The primary structure comprises 266 residues: Undecaprenyl-diphosphatase (266 aa).

Transmembrane regions (helical) follow at residues 1 to 21 (MDIF…FLPI), 39 to 59 (QGLT…VIYF), 87 to 107 (WWII…KDFI), 114 to 134 (IEVI…ADKL), 144 to 164 (VGWK…IPGT), 184 to 204 (AARF…ILVV), 218 to 238 (ALVL…HYFL), and 246 to 266 (MTPF…VIFA).

It belongs to the UppP family.

The protein resides in the cell inner membrane. It catalyses the reaction di-trans,octa-cis-undecaprenyl diphosphate + H2O = di-trans,octa-cis-undecaprenyl phosphate + phosphate + H(+). In terms of biological role, catalyzes the dephosphorylation of undecaprenyl diphosphate (UPP). Confers resistance to bacitracin. This Shewanella loihica (strain ATCC BAA-1088 / PV-4) protein is Undecaprenyl-diphosphatase.